We begin with the raw amino-acid sequence, 438 residues long: MADARGSSSSSGDGGGGEGKGGAGHGDFVGGGQHNWYHGILGAVPPPNVGRQNIVHHQYPAASLIQQHHQSPTMPLPMAQLPYVPQYTVLPTPAVLPSHHHHHGQSQISQENFQDWVPSNNVAAPHVPSAFQDWRQMCNGSAFMPFGQTAANSNVFYQNLTFNSWTSNNMPRNPVYTSFHPAAIEDHHAPLFHSNNHDIDPGFQTNFRMDQAFVPASSPFPPVSSSSHSFSSAKISNGPTYTKKAKKSNVKDPPIVFRRSDMESEKNDDNPDQTPVSEPPSMNQNGENLIIRFNCREYRVILRKELTNSDVGNIGRIVMPKRDAEAHLPALHQREGVTLKMDDFKFETTWNFKYRFWPNNKSRMYVLESTGGFVKHHGLQTGDIFIIYKSSESGKFVVRGEKAIKPNAIMPVVDCSCKNELNKSEECGFTISLQTKKT.

A compositionally biased stretch (low complexity) spans 1 to 11 (MADARGSSSSS). Disordered regions lie at residues 1–30 (MADARGSSSSSGDGGGGEGKGGAGHGDFVG) and 225–285 (SSSH…MNQN). Gly residues predominate over residues 12 to 30 (GDGGGGEGKGGAGHGDFVG). The segment covering 258 to 269 (RRSDMESEKNDD) has biased composition (basic and acidic residues). Positions 272-285 (DQTPVSEPPSMNQN) are enriched in polar residues. Residues 302 to 404 (LRKELTNSDV…KFVVRGEKAI (103 aa)) constitute a DNA-binding region (TF-B3).

The protein resides in the nucleus. In Oryza sativa subsp. japonica (Rice), this protein is Putative B3 domain-containing protein Os04g0676650.